Reading from the N-terminus, the 89-residue chain is Small ribosomal subunit protein uS15 (89 aa).

This sequence belongs to the universal ribosomal protein uS15 family. Part of the 30S ribosomal subunit. Forms a bridge to the 50S subunit in the 70S ribosome, contacting the 23S rRNA.

In terms of biological role, one of the primary rRNA binding proteins, it binds directly to 16S rRNA where it helps nucleate assembly of the platform of the 30S subunit by binding and bridging several RNA helices of the 16S rRNA. Functionally, forms an intersubunit bridge (bridge B4) with the 23S rRNA of the 50S subunit in the ribosome. The chain is Small ribosomal subunit protein uS15 from Chloroflexus aurantiacus (strain ATCC 29366 / DSM 635 / J-10-fl).